The sequence spans 260 residues: Coiled-coil domain-containing protein 172 (260 aa).

Positions 13 to 194 (SEHQAEESRR…FEDKKHEAIC (182 aa)) form a coiled coil.

This sequence belongs to the CCDC172 family. As to quaternary structure, may interact with TEKT2.

The protein resides in the cytoplasm. The protein localises to the cell projection. It is found in the cilium. This chain is Coiled-coil domain-containing protein 172 (CCDC172), found in Bos taurus (Bovine).